A 393-amino-acid chain; its full sequence is NAD(P)H-quinone oxidoreductase subunit H, chloroplastic (393 aa).

Belongs to the complex I 49 kDa subunit family. As to quaternary structure, NDH is composed of at least 16 different subunits, 5 of which are encoded in the nucleus.

The protein resides in the plastid. It localises to the chloroplast thylakoid membrane. It catalyses the reaction a plastoquinone + NADH + (n+1) H(+)(in) = a plastoquinol + NAD(+) + n H(+)(out). The enzyme catalyses a plastoquinone + NADPH + (n+1) H(+)(in) = a plastoquinol + NADP(+) + n H(+)(out). Its function is as follows. NDH shuttles electrons from NAD(P)H:plastoquinone, via FMN and iron-sulfur (Fe-S) centers, to quinones in the photosynthetic chain and possibly in a chloroplast respiratory chain. The immediate electron acceptor for the enzyme in this species is believed to be plastoquinone. Couples the redox reaction to proton translocation, and thus conserves the redox energy in a proton gradient. The protein is NAD(P)H-quinone oxidoreductase subunit H, chloroplastic of Solanum lycopersicum (Tomato).